A 26-amino-acid polypeptide reads, in one-letter code: L-amino-acid oxidase (26 aa).

It belongs to the flavin monoamine oxidase family. As to quaternary structure, monomer. The cofactor is FAD. Not glycosylated. In terms of tissue distribution, expressed by the ink gland.

Its subcellular location is the secreted. The enzyme catalyses an L-alpha-amino acid + O2 + H2O = a 2-oxocarboxylate + H2O2 + NH4(+). In terms of biological role, catalyzes the oxidative deamination of positively charged L-amino acids L-Lys and L-Arg but not of amino acids L-His, L-Asp or L-Glu. Has antibacterial activity against the Gram-positive bacterium S.aureus (MIC=15 ug/ml). This antibacterial activity is bacteriostatic in the absence of amino acids L-Lys or L-Arg but bactericidal in their presence. The antibacterial effect is largely dependent on H(2)O(2) produced in the oxidative deamination of substrates. Has hemagglutinating activity towards rabbit erythrocytes. Hemagglutinating activity is inhibited by the glycoprotein fetuin, but not by glucose, mannose, galactose, N-acetylglucosamine, N-acetylgalactosamine or sialic acid. The protein is L-amino-acid oxidase of Aplysia dactylomela (Spotted sea hare).